A 350-amino-acid polypeptide reads, in one-letter code: Protein disulfide isomerase Creld2 (350 aa).

The N-terminal stretch at 1 to 22 is a signal peptide; that stretch reads MHLLLAAAFGLLLLLPPPGAVA. The CXXC signature appears at 29-32; sequence CQRC. 4 disulfide bridges follow: Cys29–Cys32, Cys138–Cys152, Cys146–Cys164, and Cys166–Cys175. An EGF-like 1 domain is found at 134 to 176; the sequence is DCQECQGGSERPCSGNGYCSGDGSRQGDGSCQCHTGYKGPLCI. The FU 1 repeat unit spans residues 191–238; it reads HSICSACDESCKTCSGPSNKDCIQCEVGWARVEDACVDVDECAAETSP. Asn249 carries N-linked (GlcNAc...) asparagine glycosylation. An FU 2 repeat occupies 251 to 298; sequence SYTCEDCDSTCVGCTGKGPANCKECIAGYTKESGQCTDIDECSLEEKA. Positions 261–264 match the CXXC motif; the sequence is CVGC. 4 cysteine pairs are disulfide-bonded: Cys261–Cys264, Cys292–Cys306, Cys299–Cys315, and Cys317–Cys328. Residues 288–329 form the EGF-like 2; calcium-binding domain; sequence DIDECSLEEKACKRKNENCYNVPGSFVCVCPEGFEETEDACV.

It belongs to the CRELD family. As to quaternary structure, interacts with CHRNA4. Component of a complex containing at least CRELD2, MANF, MATN3 and PDIA4. As to expression, expressed in chondrocytes (at protein level).

It localises to the endoplasmic reticulum. It catalyses the reaction Catalyzes the rearrangement of -S-S- bonds in proteins.. In terms of biological role, protein disulfide isomerase. Might play a role in the unfolded protein response. May regulate transport of alpha4-beta2 neuronal acetylcholine receptor. The protein is Protein disulfide isomerase Creld2 (Creld2) of Mus musculus (Mouse).